The following is a 188-amino-acid chain: Large ribosomal subunit protein uL6 (188 aa).

Belongs to the universal ribosomal protein uL6 family. In terms of assembly, part of the 50S ribosomal subunit.

In terms of biological role, this protein binds to the 23S rRNA, and is important in its secondary structure. It is located near the subunit interface in the base of the L7/L12 stalk, and near the tRNA binding site of the peptidyltransferase center. This is Large ribosomal subunit protein uL6 from Myxococcus xanthus (strain DK1622).